Reading from the N-terminus, the 643-residue chain is tRNA 5-methylaminomethyl-2-thiouridine biosynthesis bifunctional protein MnmC (643 aa).

The tRNA (mnm(5)s(2)U34)-methyltransferase stretch occupies residues 1-223; it reads MPDRLVSATL…VDDRLVGDYA (223 aa). Residues 247 to 643 are FAD-dependent cmnm(5)s(2)U34 oxidoreductase; the sequence is IGAGLAGCAV…LRARRVGSAG (397 aa).

In the N-terminal section; belongs to the methyltransferase superfamily. tRNA (mnm(5)s(2)U34)-methyltransferase family. It in the C-terminal section; belongs to the DAO family. FAD is required as a cofactor.

It is found in the cytoplasm. It carries out the reaction 5-aminomethyl-2-thiouridine(34) in tRNA + S-adenosyl-L-methionine = 5-methylaminomethyl-2-thiouridine(34) in tRNA + S-adenosyl-L-homocysteine + H(+). Functionally, catalyzes the last two steps in the biosynthesis of 5-methylaminomethyl-2-thiouridine (mnm(5)s(2)U) at the wobble position (U34) in tRNA. Catalyzes the FAD-dependent demodification of cmnm(5)s(2)U34 to nm(5)s(2)U34, followed by the transfer of a methyl group from S-adenosyl-L-methionine to nm(5)s(2)U34, to form mnm(5)s(2)U34. This chain is tRNA 5-methylaminomethyl-2-thiouridine biosynthesis bifunctional protein MnmC, found in Burkholderia orbicola (strain AU 1054).